Here is a 93-residue protein sequence, read N- to C-terminus: Cobalt transport protein CbiN (93 aa).

2 helical membrane-spanning segments follow: residues 5–25 and 63–83; these read LMLLVMVVALVILPFFINHGG and LLFTLQGSLGAAVIFYILGYC.

This sequence belongs to the CbiN family. Forms an energy-coupling factor (ECF) transporter complex composed of an ATP-binding protein (A component, CbiO), a transmembrane protein (T component, CbiQ) and 2 possible substrate-capture proteins (S components, CbiM and CbiN) of unknown stoichimetry.

The protein resides in the cell inner membrane. Its pathway is cofactor biosynthesis; adenosylcobalamin biosynthesis. Its function is as follows. Part of the energy-coupling factor (ECF) transporter complex CbiMNOQ involved in cobalt import. This chain is Cobalt transport protein CbiN, found in Salmonella paratyphi B (strain ATCC BAA-1250 / SPB7).